Reading from the N-terminus, the 176-residue chain is NAD(P)H-quinone oxidoreductase subunit 6, chloroplastic (176 aa).

The next 5 membrane-spanning stretches (helical) occupy residues 10 to 30, 33 to 53, 61 to 81, 92 to 112, and 152 to 172; these read FLLVFLGLGLIVGGLGVVLLT, IYSAFSLGLVLVCISLFHIPA, AQLLIYVGAINVLIVFAVMFM, LWTVGDGVTSLVCTSIFVSLI, and FFLPFELISIILLVALIGAIA.

The protein belongs to the complex I subunit 6 family. In terms of assembly, NDH is composed of at least 16 different subunits, 5 of which are encoded in the nucleus.

It is found in the plastid. The protein resides in the chloroplast thylakoid membrane. The catalysed reaction is a plastoquinone + NADH + (n+1) H(+)(in) = a plastoquinol + NAD(+) + n H(+)(out). It carries out the reaction a plastoquinone + NADPH + (n+1) H(+)(in) = a plastoquinol + NADP(+) + n H(+)(out). NDH shuttles electrons from NAD(P)H:plastoquinone, via FMN and iron-sulfur (Fe-S) centers, to quinones in the photosynthetic chain and possibly in a chloroplast respiratory chain. The immediate electron acceptor for the enzyme in this species is believed to be plastoquinone. Couples the redox reaction to proton translocation, and thus conserves the redox energy in a proton gradient. This is NAD(P)H-quinone oxidoreductase subunit 6, chloroplastic (ndhG) from Nandina domestica (Heavenly bamboo).